The following is a 188-amino-acid chain: Adenylate kinase (188 aa).

An ATP-binding site is contributed by 12–17 (GSGKTT). The interval 33–62 (STGDLLRAEVASGSELGKKIDSFISKGNLV) is NMP. Residues Thr-34, Arg-39, 60–62 (NLV), 87–90 (GYPR), and Gln-94 contribute to the AMP site. Residues 129-135 (GRARGAD) are LID. Residue Arg-130 coordinates ATP. Residues Arg-132 and Arg-144 each contribute to the AMP site. ATP is bound at residue Arg-172.

This sequence belongs to the adenylate kinase family. As to quaternary structure, monomer.

The protein localises to the cytoplasm. The enzyme catalyses AMP + ATP = 2 ADP. The protein operates within purine metabolism; AMP biosynthesis via salvage pathway; AMP from ADP: step 1/1. Its function is as follows. Catalyzes the reversible transfer of the terminal phosphate group between ATP and AMP. Plays an important role in cellular energy homeostasis and in adenine nucleotide metabolism. This Campylobacter curvus (strain 525.92) protein is Adenylate kinase.